The sequence spans 788 residues: Mediator of RNA polymerase II transcription subunit 15 (788 aa).

Positions 9–73 (DWRSTAFRQK…IHFRDIHNKK (65 aa)) are interaction with SREBF1. Disordered stretches follow at residues 95–139 (GAAG…MAPH) and 260–329 (QQQA…PLVS). Residues 108–117 (QSLGGMGSLG) are compositionally biased toward gly residues. A compositionally biased stretch (low complexity) spans 260–269 (QQQALQAQPP). Pro residues predominate over residues 270 to 284 (IQQPPMQQPQPPPSQ). 2 stretches are compositionally biased toward low complexity: residues 285-294 (ALPQQLQQMH) and 309-329 (PVAQ…PLVS). Residue arginine 349 is modified to Asymmetric dimethylarginine. The disordered stretch occupies residues 412-530 (SSSIPLGRQP…PAGSSQAEEQ (119 aa)). Low complexity predominate over residues 426–446 (SQSSLPMLSSPSPGQQVQTPQ). Residues 447–459 (SMPPPPQPSPQPG) show a composition bias toward pro residues. Positions 460–482 (QPSSQPNSNVSSGPAPSPSSFLP) are enriched in low complexity. Composition is skewed to polar residues over residues 493-503 (VTARTPQNFSV) and 511-529 (TPVN…QAEE). A Nuclear localization signal motif is present at residues 547-564 (RRMINKIDKNEDRKKDLS). A Phosphothreonine modification is found at threonine 603.

The protein belongs to the Mediator complex subunit 15 family. As to quaternary structure, component of the Mediator complex, which is composed of MED1, MED4, MED6, MED7, MED8, MED9, MED10, MED11, MED12, MED13, MED13L, MED14, MED15, MED16, MED17, MED18, MED19, MED20, MED21, MED22, MED23, MED24, MED25, MED26, MED27, MED29, MED30, MED31, CCNC, CDK8 and CDC2L6/CDK11. The MED12, MED13, CCNC and CDK8 subunits form a distinct module termed the CDK8 module. Mediator containing the CDK8 module is less active than Mediator lacking this module in supporting transcriptional activation. Individual preparations of the Mediator complex lacking one or more distinct subunits have been variously termed ARC, CRSP, DRIP, PC2, SMCC and TRAP. Interacts with SMAD2, SMAD3, SREBF1 and SREBF2. Interacts with WWTR1. Interacts with TRIM11. Ubiquitinated by TRIM11, leading to proteasomal degradation. As to expression, expressed in all tissues examined, including heart, brain, lung, spleen, thymus, pancreas, blood leukocyte and placenta. However, the level of expression varied, with highest expression in the placenta and peripheral blood and lowest in the pancreas and kidney.

Its subcellular location is the cytoplasm. The protein localises to the nucleus. Its function is as follows. Component of the Mediator complex, a coactivator involved in the regulated transcription of nearly all RNA polymerase II-dependent genes. Mediator functions as a bridge to convey information from gene-specific regulatory proteins to the basal RNA polymerase II transcription machinery. Mediator is recruited to promoters by direct interactions with regulatory proteins and serves as a scaffold for the assembly of a functional preinitiation complex with RNA polymerase II and the general transcription factors. Required for cholesterol-dependent gene regulation. Positively regulates the Nodal signaling pathway. This Homo sapiens (Human) protein is Mediator of RNA polymerase II transcription subunit 15 (MED15).